Consider the following 1594-residue polypeptide: Transcription factor Gibbin (1594 aa).

Disordered regions lie at residues 19–111 (PDYL…RHWD), 149–241 (LRLS…LADA), 256–307 (QLLE…DPLG), and 367–464 (CSPH…RKGK). A compositionally biased stretch (pro residues) spans 30 to 47 (GGPPTPRPLLPTRPPASP). Residue K79 is modified to N6-acetyllysine. Positions 165-177 (SFFSSPSLANSIR) are enriched in polar residues. Residues 178-193 (SPEERANPHTKSERPS) show a composition bias toward basic and acidic residues. Over residues 228–240 (PEPDGPDYSELAD) the composition is skewed to acidic residues. Phosphoserine is present on S267. Residues 272 to 303 (PQLLDPQPRFLDPQALEPLGEGLELPPLQPLA) show a composition bias toward low complexity. The segment covering 391-401 (ILCRRRKAGRG) has biased composition (basic residues). Residues 395–407 (RRKAGRGRKADSG) constitute a DNA-binding region (a.T hook 1). Positions 427–447 (EPPPLPPPPPPTLSGPGPVPE) are enriched in pro residues. The segment at residues 541–553 (KRKRGRPPKNLLL) is a DNA-binding region (a.T hook 2). The interval 578-604 (MPEVKKRRRRKQKLASPQPSYAADAND) is disordered. S593 bears the Phosphoserine mark. K606 is covalently cross-linked (Glycyl lysine isopeptide (Lys-Gly) (interchain with G-Cter in SUMO2)). Positions 714–789 (LTELGHPRKR…PGGQAGRNCG (76 aa)) are disordered. Residues 734–743 (KPKRKRRSRK) show a composition bias toward basic residues. 2 positions are modified to phosphoserine: S825 and S842. R887 carries the post-translational modification Omega-N-methylarginine. Position 892 is a phosphoserine (S892). Residues 942-967 (KLAPPPSAVARSPTTHPPANTYPPQY) are disordered. Position 1060 is a phosphoserine (S1060). Disordered stretches follow at residues 1152–1191 (VSET…QSSL) and 1245–1306 (STSA…PDLG). 3 stretches are compositionally biased toward low complexity: residues 1153-1168 (SETF…QFSQ), 1180-1191 (SEASSSEGQSSL), and 1245-1264 (STSA…PRQP). Phosphoserine is present on S1180. S1315, S1317, and S1392 each carry phosphoserine. T1394 is modified (phosphothreonine). S1396 is subject to Phosphoserine. K1402 participates in a covalent cross-link: Glycyl lysine isopeptide (Lys-Gly) (interchain with G-Cter in SUMO2). The tract at residues 1495 to 1525 (HLASPPATPKADKEPLEMARPPGPPRGPAAA) is disordered. 2 positions are modified to phosphoserine: S1498 and S1540.

Its subcellular location is the nucleus. The protein localises to the chromosome. In terms of biological role, transcription factor required for the proper patterning of the epidermis, which plays a key role in early epithelial morphogenesis. Directly binds promoter and enhancer regions and acts by maintaining local enhancer-promoter chromatin architecture. Interacts with many sequence-specific zinc-finger transcription factors and methyl-CpG-binding proteins to regulate the expression of mesoderm genes that wire surface ectoderm stratification. This Mus musculus (Mouse) protein is Transcription factor Gibbin.